A 922-amino-acid polypeptide reads, in one-letter code: Two-component sensor PprA (922 aa).

Low complexity predominate over residues M1 to A10. The tract at residues M1–G22 is disordered. The PAC 1 domain maps to V506–E558. The 64-residue stretch at S559–L622 folds into the PAS domain. In terms of domain architecture, PAC 2 spans E632–Q684. Residues G697–A916 enclose the Histidine kinase domain. Position 700 is a phosphohistidine; by autocatalysis (H700).

Autophosphorylated.

The catalysed reaction is ATP + protein L-histidine = ADP + protein N-phospho-L-histidine.. Functionally, member of the two-component regulatory system PprA/PprB involved in biofilm formation by controlling the expression of many related genes including type IVb pili major subunit flp pilin, adhesin bapA or cupE fimbriae. Functions as a heme sensor histidine kinase which is autophosphorylated at a histidine residue and transfers its phosphate group to PprB. This chain is Two-component sensor PprA, found in Pseudomonas aeruginosa (strain ATCC 15692 / DSM 22644 / CIP 104116 / JCM 14847 / LMG 12228 / 1C / PRS 101 / PAO1).